A 94-amino-acid polypeptide reads, in one-letter code: DNA-directed RNA polymerase subunit omega (94 aa).

The protein belongs to the RNA polymerase subunit omega family. In terms of assembly, the RNAP catalytic core consists of 2 alpha, 1 beta, 1 beta' and 1 omega subunit. When a sigma factor is associated with the core the holoenzyme is formed, which can initiate transcription.

The catalysed reaction is RNA(n) + a ribonucleoside 5'-triphosphate = RNA(n+1) + diphosphate. In terms of biological role, promotes RNA polymerase assembly. Latches the N- and C-terminal regions of the beta' subunit thereby facilitating its interaction with the beta and alpha subunits. The chain is DNA-directed RNA polymerase subunit omega from Parafrankia sp. (strain EAN1pec).